The following is a 232-amino-acid chain: tRNA (guanine-N(1)-)-methyltransferase (232 aa).

S-adenosyl-L-methionine-binding positions include Gly111 and 131-136 (IGDYIL).

Belongs to the RNA methyltransferase TrmD family. Homodimer.

It localises to the cytoplasm. The catalysed reaction is guanosine(37) in tRNA + S-adenosyl-L-methionine = N(1)-methylguanosine(37) in tRNA + S-adenosyl-L-homocysteine + H(+). Specifically methylates guanosine-37 in various tRNAs. The chain is tRNA (guanine-N(1)-)-methyltransferase from Bartonella henselae (strain ATCC 49882 / DSM 28221 / CCUG 30454 / Houston 1) (Rochalimaea henselae).